An 889-amino-acid polypeptide reads, in one-letter code: DNA gyrase subunit A (889 aa).

The region spanning 35–501 (LPDVRDGLKP…GFEDLEDEDL (467 aa)) is the Topo IIA-type catalytic domain. Catalysis depends on Tyr-123, which acts as the O-(5'-phospho-DNA)-tyrosine intermediate. The short motif at 528 to 534 (QNRGGRG) is the GyrA-box element. Positions 811 to 889 (KEDAEDETNE…IQQSSDEDEE (79 aa)) are disordered. Acidic residues predominate over residues 813 to 823 (DAEDETNEDEQ). The segment covering 863-875 (DGRIEVRQDFMDR) has biased composition (basic and acidic residues). Over residues 876–889 (VEEDIQQSSDEDEE) the composition is skewed to acidic residues.

Belongs to the type II topoisomerase GyrA/ParC subunit family. Heterotetramer, composed of two GyrA and two GyrB chains. In the heterotetramer, GyrA contains the active site tyrosine that forms a transient covalent intermediate with DNA, while GyrB binds cofactors and catalyzes ATP hydrolysis.

It localises to the cytoplasm. It carries out the reaction ATP-dependent breakage, passage and rejoining of double-stranded DNA.. Its function is as follows. A type II topoisomerase that negatively supercoils closed circular double-stranded (ds) DNA in an ATP-dependent manner to modulate DNA topology and maintain chromosomes in an underwound state. Negative supercoiling favors strand separation, and DNA replication, transcription, recombination and repair, all of which involve strand separation. Also able to catalyze the interconversion of other topological isomers of dsDNA rings, including catenanes and knotted rings. Type II topoisomerases break and join 2 DNA strands simultaneously in an ATP-dependent manner. This chain is DNA gyrase subunit A, found in Staphylococcus aureus (strain Mu50 / ATCC 700699).